The sequence spans 360 residues: Phospho-N-acetylmuramoyl-pentapeptide-transferase (360 aa).

10 helical membrane passes run Gly27–Leu47, Thr71–Ala91, Trp93–Phe113, Leu134–Ala154, Thr168–Ala188, Gly199–Val219, Ile239–Pro259, Ala262–Val282, Leu288–Val308, and Thr337–Leu357.

This sequence belongs to the glycosyltransferase 4 family. MraY subfamily. Mg(2+) is required as a cofactor.

The protein resides in the cell inner membrane. It catalyses the reaction UDP-N-acetyl-alpha-D-muramoyl-L-alanyl-gamma-D-glutamyl-meso-2,6-diaminopimeloyl-D-alanyl-D-alanine + di-trans,octa-cis-undecaprenyl phosphate = di-trans,octa-cis-undecaprenyl diphospho-N-acetyl-alpha-D-muramoyl-L-alanyl-D-glutamyl-meso-2,6-diaminopimeloyl-D-alanyl-D-alanine + UMP. It participates in cell wall biogenesis; peptidoglycan biosynthesis. Functionally, catalyzes the initial step of the lipid cycle reactions in the biosynthesis of the cell wall peptidoglycan: transfers peptidoglycan precursor phospho-MurNAc-pentapeptide from UDP-MurNAc-pentapeptide onto the lipid carrier undecaprenyl phosphate, yielding undecaprenyl-pyrophosphoryl-MurNAc-pentapeptide, known as lipid I. The protein is Phospho-N-acetylmuramoyl-pentapeptide-transferase of Ruegeria pomeroyi (strain ATCC 700808 / DSM 15171 / DSS-3) (Silicibacter pomeroyi).